A 272-amino-acid chain; its full sequence is Imidazole glycerol phosphate synthase subunit HisF (272 aa).

Catalysis depends on residues Asp11 and Asp130.

The protein belongs to the HisA/HisF family. Heterodimer of HisH and HisF.

The protein resides in the cytoplasm. The enzyme catalyses 5-[(5-phospho-1-deoxy-D-ribulos-1-ylimino)methylamino]-1-(5-phospho-beta-D-ribosyl)imidazole-4-carboxamide + L-glutamine = D-erythro-1-(imidazol-4-yl)glycerol 3-phosphate + 5-amino-1-(5-phospho-beta-D-ribosyl)imidazole-4-carboxamide + L-glutamate + H(+). The protein operates within amino-acid biosynthesis; L-histidine biosynthesis; L-histidine from 5-phospho-alpha-D-ribose 1-diphosphate: step 5/9. In terms of biological role, IGPS catalyzes the conversion of PRFAR and glutamine to IGP, AICAR and glutamate. The HisF subunit catalyzes the cyclization activity that produces IGP and AICAR from PRFAR using the ammonia provided by the HisH subunit. The protein is Imidazole glycerol phosphate synthase subunit HisF of Methanococcus maripaludis (strain DSM 14266 / JCM 13030 / NBRC 101832 / S2 / LL).